The primary structure comprises 686 residues: U-box domain-containing protein 19 (686 aa).

Positions 277–351 constitute a U-box domain; sequence LNVDDLRCPI…QSYSKQNGVV (75 aa). 5 ARM repeats span residues 406–445, 448–489, 491–533, 536–577, and 579–620; these read TFYR…NLSK, AGKT…YLSS, GDYS…SLLM, PDNH…KMAE, and PDGM…NLCH.

It catalyses the reaction S-ubiquitinyl-[E2 ubiquitin-conjugating enzyme]-L-cysteine + [acceptor protein]-L-lysine = [E2 ubiquitin-conjugating enzyme]-L-cysteine + N(6)-ubiquitinyl-[acceptor protein]-L-lysine.. The protein operates within protein modification; protein ubiquitination. Its function is as follows. Functions as an E3 ubiquitin ligase. The protein is U-box domain-containing protein 19 (PUB19) of Arabidopsis thaliana (Mouse-ear cress).